Here is a 471-residue protein sequence, read N- to C-terminus: Abscisic acid 8'-hydroxylase 1 (471 aa).

The helical transmembrane segment at 1–21 (MGAFLLFVCVLAPFLLVCAVR) threads the bilayer. Position 415 (cysteine 415) interacts with heme.

It belongs to the cytochrome P450 family. Heme is required as a cofactor. As to expression, in seedlings and expanding leaves.

It localises to the membrane. The catalysed reaction is 2-cis-(+)-abscisate + reduced [NADPH--hemoprotein reductase] + O2 = (+)-8'-hydroxyabscisate + oxidized [NADPH--hemoprotein reductase] + H2O + H(+). The protein operates within plant hormone degradation; abscisic acid degradation. Involved in the oxidative degradation of abscisic acid. This chain is Abscisic acid 8'-hydroxylase 1 (CYP707A5), found in Oryza sativa subsp. indica (Rice).